We begin with the raw amino-acid sequence, 666 residues long: Enzymatic polyprotein (666 aa).

Asp-54 is a catalytic residue. In terms of domain architecture, Reverse transcriptase spans 215-445 (ENPIDPIKSK…EKINFLGLEI (231 aa)).

This sequence belongs to the caulimoviridae enzymatic polyprotein family.

The enzyme catalyses DNA(n) + a 2'-deoxyribonucleoside 5'-triphosphate = DNA(n+1) + diphosphate. Functionally, encodes for at least two polypeptides: protease (PR) and reverse transcriptase (RT). The protease processes the polyprotein in cis. Reverse transcriptase is multifunctional enzyme that converts the viral RNA genome into dsDNA in viral cytoplasmic capsids. This enzyme displays a DNA polymerase activity that can copy either DNA or RNA templates, and a ribonuclease H (RNase H) activity that cleaves the RNA strand of RNA-DNA heteroduplexes in a partially processive 3'- to 5'-endonucleasic mode. Neo-synthesized pregenomic RNA (pgRNA) are encapsidated, and reverse-transcribed inside the nucleocapsid. Partial (+)DNA is synthesized from the (-)DNA template and generates the relaxed circular DNA (RC-DNA) genome. After budding and infection, the RC-DNA migrates in the nucleus, and is converted into a plasmid-like covalently closed circular DNA (cccDNA). The protein is Enzymatic polyprotein of Figwort mosaic virus (strain DxS) (FMV).